A 231-amino-acid polypeptide reads, in one-letter code: 4-aminobenzoate synthase (231 aa).

Fe(2+) contacts are provided by Glu81, His88, Glu142, His174, Asp178, and His181.

It belongs to the CADD family. In terms of assembly, homodimer. During infection, interacts with death domains of mammalian tumor necrosis factor (TNF) family receptors Fas, DR4, DR5 and to some extent TNFR1, but not with the respective downstream adapters. Fe(2+) serves as cofactor. Mn(2+) is required as a cofactor.

It is found in the secreted. It localises to the host cytoplasm. With respect to regulation, the protein is a cosubstrate rather than a true enzyme and is left in an inactive state after a single turnover. Inactive under anaerobic conditions. Its function is as follows. Involved in de novo para-aminobenzoate (PABA) biosynthesis. Acts as a self-sacrificing or 'suicide' enzyme that utilizes its own active site tyrosine residue(s) as the substrate for PABA synthesis. The side chain of the tyrosine residue is released from the protein backbone via cleavage of the C(alpha)-C(beta) bond, leaving a glycine in place of the original tyrosine residue. Reaction requires O(2) and a reduced dimetal cofactor. Functionally, was also identified as a specific toxin that associates with death domains of tumor necrosis factor family (TNF) receptors and induces apoptosis in mammalian cell lines through a Caspase-dependent mechanism. This chain is 4-aminobenzoate synthase, found in Chlamydia trachomatis serovar D (strain ATCC VR-885 / DSM 19411 / UW-3/Cx).